The following is a 978-amino-acid chain: Translation initiation factor IF-2 (978 aa).

2 disordered regions span residues 107 to 129 and 146 to 387; these read AEAPALETEQEVEAAPQVDNLEL and QEEE…HRVQ. The segment covering 146 to 169 has biased composition (basic and acidic residues); that stretch reads QEEELSERRRQREEQEARSREASE. Positions 170–186 are enriched in low complexity; it reads KAAAVAAEAAEAAAAQA. A compositionally biased stretch (basic and acidic residues) spans 215-259; the sequence is AEKEQHLAKEKGLAREKELAESKARAAEDVVRAADLGDRRRKAES. Composition is skewed to low complexity over residues 295–326 and 349–361; these read KPAAGAVPAKPAKPGAPGAPGAPAAGAAAGAG and PTRGATAAPGAGR. The segment covering 375 to 386 has biased composition (basic and acidic residues); that stretch reads GSSDRDRDDHRV. The tr-type G domain maps to 478 to 647; that stretch reads PRAPVVTVMG…LLQAEVLELK (170 aa). Residues 487–494 are G1; that stretch reads GHVDHGKT. Residue 487–494 coordinates GTP; sequence GHVDHGKT. The tract at residues 512-516 is G2; the sequence is GITQH. The G3 stretch occupies residues 533–536; it reads DTPG. Residues 533–537 and 587–590 each bind GTP; these read DTPGH and NKID. The interval 587–590 is G4; that stretch reads NKID. Residues 623–625 are G5; the sequence is SAK.

Belongs to the TRAFAC class translation factor GTPase superfamily. Classic translation factor GTPase family. IF-2 subfamily.

Its subcellular location is the cytoplasm. In terms of biological role, one of the essential components for the initiation of protein synthesis. Protects formylmethionyl-tRNA from spontaneous hydrolysis and promotes its binding to the 30S ribosomal subunits. Also involved in the hydrolysis of GTP during the formation of the 70S ribosomal complex. The protein is Translation initiation factor IF-2 of Albidiferax ferrireducens (strain ATCC BAA-621 / DSM 15236 / T118) (Rhodoferax ferrireducens).